The following is a 121-amino-acid chain: HTH-type transcriptional regulator Rv1152 (121 aa).

An HTH gntR-type domain is found at 15–83; the sequence is KPLFDQLRTQ…GRFGTFISRF (69 aa). Residues 43–62 constitute a DNA-binding region (H-T-H motif); the sequence is VRDLAGQLGVAANTVARAYR.

The protein localises to the cytoplasm. It localises to the secreted. Its subcellular location is the cell wall. Transcriptional regulator that modulates resistance to vancomycin and aminoglycosides. Negatively regulates the expression of several genes responsive to vancomycin, resulting in decreased susceptibility of bacteria to vancomycin. Negatively regulates the expression of genes encoding the ribosome binding protein Hsp, the small subunit of sulfate adenylyltransferase CysD, the L-lysine-epsilon aminotransferase LAT and the protease HtpX. Also modulates purine metabolism and aminoglycoside antibiotic resistance. Negatively regulates the expression of purine metabolism-related genes and the accumulation of purine metabolites, which affects aminoglycoside antibiotic resistance. The protein is HTH-type transcriptional regulator Rv1152 of Mycobacterium tuberculosis (strain ATCC 25618 / H37Rv).